Consider the following 564-residue polypeptide: O-fucosyltransferase 5 (564 aa).

The tract at residues 1-28 (MVRNSSDEEEDHRNLIPQNDTRDNDLNL) is disordered. The chain crosses the membrane as a helical; Signal-anchor for type II membrane protein span at residues 70 to 90 (YVVAAVSLTLFVGLLFLFTDT). Residues Asn129, Asn134, and Asn174 are each glycosylated (N-linked (GlcNAc...) asparagine). Substrate contacts are provided by residues 413-415 (HLR) and 529-530 (TF).

This sequence belongs to the glycosyltransferase GT106 family.

It is found in the membrane. It participates in glycan metabolism. This is O-fucosyltransferase 5 from Arabidopsis thaliana (Mouse-ear cress).